Consider the following 555-residue polypeptide: Potassium-transporting ATPase potassium-binding subunit (555 aa).

Transmembrane regions (helical) follow at residues Ile-2–Ile-22, Gln-60–Phe-80, Ile-130–Phe-150, Val-173–Thr-193, Met-246–Tyr-266, Ile-278–Glu-298, Ala-374–Val-394, Leu-412–Leu-432, Leu-483–Leu-503, and Gly-525–Leu-545.

This sequence belongs to the KdpA family. The system is composed of three essential subunits: KdpA, KdpB and KdpC.

Its subcellular location is the cell membrane. Part of the high-affinity ATP-driven potassium transport (or Kdp) system, which catalyzes the hydrolysis of ATP coupled with the electrogenic transport of potassium into the cytoplasm. This subunit binds the extracellular potassium ions and delivers the ions to the membrane domain of KdpB through an intramembrane tunnel. In Bacillus thuringiensis (strain Al Hakam), this protein is Potassium-transporting ATPase potassium-binding subunit.